The primary structure comprises 412 residues: Probable inactive allantoicase (412 aa).

It belongs to the allantoicase family.

Functionally, the function of this enzyme is unclear as allantoicase activity is not known to exist in mammals. The sequence is that of Probable inactive allantoicase (ALLC) from Bos taurus (Bovine).